Here is a 101-residue protein sequence, read N- to C-terminus: MAQTLDDLIRTSELPVFIDFWADWCGPCKMVAPSVKQLASEFKGRLIVVKVNVDQQPDAAARFQVQGIPALMLFVGGQLKWRTAGAIPYQQMRQEVLKAIG.

Residues 2 to 101 enclose the Thioredoxin domain; the sequence is AQTLDDLIRT…MRQEVLKAIG (100 aa). A disulfide bridge connects residues Cys-25 and Cys-28.

Belongs to the thioredoxin family.

Participates in various redox reactions through the reversible oxidation of its active center dithiol to a disulfide and catalyzes dithiol-disulfide exchange reactions. This is Thioredoxin 1 (trx1) from Chlorobaculum tepidum (strain ATCC 49652 / DSM 12025 / NBRC 103806 / TLS) (Chlorobium tepidum).